The following is a 785-amino-acid chain: Penicillin-binding protein 1A (785 aa).

The segment at 1–61 (MPPDDRLTAV…SGPGGPSGPG (61 aa)) is disordered. Residues 33 to 45 (SPPPKPPPPPPPG) show a composition bias toward pro residues. Positions 46–59 (RGGGGPSGPGGPSG) are enriched in gly residues. The helical transmembrane segment at 77 to 97 (IAVAVMVLLPLITFGMAYMIV) threads the bilayer. The interval 118–299 (GSEIARIVPP…RWNWVLDGMV (182 aa)) is transglycosylase. Glutamate 151 serves as the catalytic Proton donor; for transglycosylase activity. The tract at residues 392-662 (AVVSIDPRTG…EGVKPLVNKW (271 aa)) is transpeptidase. Serine 426 serves as the catalytic Acyl-ester intermediate; for transpeptidase activity. Disordered stretches follow at residues 605 to 626 (SRGH…VQLG), 690 to 726 (ESFP…QPSV), and 738 to 785 (GITI…PPPP). 2 stretches are compositionally biased toward pro residues: residues 708 to 721 (PAAP…PTDP) and 743 to 758 (IGPP…PGAP). Over residues 759–775 (GAPVGPGAPEVPVAPGA) the composition is skewed to low complexity.

The protein resides in the cell membrane. The catalysed reaction is [GlcNAc-(1-&gt;4)-Mur2Ac(oyl-L-Ala-gamma-D-Glu-L-Lys-D-Ala-D-Ala)](n)-di-trans,octa-cis-undecaprenyl diphosphate + beta-D-GlcNAc-(1-&gt;4)-Mur2Ac(oyl-L-Ala-gamma-D-Glu-L-Lys-D-Ala-D-Ala)-di-trans,octa-cis-undecaprenyl diphosphate = [GlcNAc-(1-&gt;4)-Mur2Ac(oyl-L-Ala-gamma-D-Glu-L-Lys-D-Ala-D-Ala)](n+1)-di-trans,octa-cis-undecaprenyl diphosphate + di-trans,octa-cis-undecaprenyl diphosphate + H(+). It carries out the reaction Preferential cleavage: (Ac)2-L-Lys-D-Ala-|-D-Ala. Also transpeptidation of peptidyl-alanyl moieties that are N-acyl substituents of D-alanine.. It participates in cell wall biogenesis; peptidoglycan biosynthesis. Functionally, cell wall formation. Synthesis of cross-linked peptidoglycan from the lipid intermediates. The enzyme has a penicillin-insensitive transglycosylase N-terminal domain (formation of linear glycan strands) and a penicillin-sensitive transpeptidase C-terminal domain (cross-linking of the peptide subunits). This chain is Penicillin-binding protein 1A (ponA1), found in Mycolicibacterium smegmatis (strain ATCC 700084 / mc(2)155) (Mycobacterium smegmatis).